The sequence spans 122 residues: Large ribosomal subunit protein uL18 (122 aa).

The protein belongs to the universal ribosomal protein uL18 family. Part of the 50S ribosomal subunit; part of the 5S rRNA/L5/L18/L25 subcomplex. Contacts the 5S and 23S rRNAs.

Its function is as follows. This is one of the proteins that bind and probably mediate the attachment of the 5S RNA into the large ribosomal subunit, where it forms part of the central protuberance. This is Large ribosomal subunit protein uL18 from Syntrophotalea carbinolica (strain DSM 2380 / NBRC 103641 / GraBd1) (Pelobacter carbinolicus).